Consider the following 168-residue polypeptide: PTS system glucose-specific EIIA component (168 aa).

The PTS EIIA type-1 domain maps to aspartate 38–asparagine 142. Residues histidine 75 and histidine 90 each contribute to the Zn(2+) site. The Tele-phosphohistidine intermediate; for EIIA activity role is filled by histidine 90. The residue at position 90 (histidine 90) is a Phosphohistidine; by HPr.

Zn(2+) is required as a cofactor.

It is found in the cytoplasm. The phosphoenolpyruvate-dependent sugar phosphotransferase system (sugar PTS), a major carbohydrate active transport system, catalyzes the phosphorylation of incoming sugar substrates concomitantly with their translocation across the cell membrane. The enzyme II complex composed of PtsG and Crr is involved in glucose transport. The sequence is that of PTS system glucose-specific EIIA component (crr) from Buchnera aphidicola subsp. Baizongia pistaciae (strain Bp).